The following is a 192-amino-acid chain: MYVVFEGIDCVGKSTQISLLKEIYKDAIFTLEPGGTELGKHLREILLNKTHPINKRAELLLFLADRAQHFEEILKTNQNKLIISDRSFISGMAYAKDFENDLLFALNSFALENFFPQKIIFLKGDANLIQERLSQKELDSIEKRGIEYFLSVQDKLEKVLHFLKEKISVEILTLDAKESKEKLHQQIKEFLQ.

Gly7–Ser14 contacts ATP.

It belongs to the thymidylate kinase family.

It catalyses the reaction dTMP + ATP = dTDP + ADP. In terms of biological role, phosphorylation of dTMP to form dTDP in both de novo and salvage pathways of dTTP synthesis. This Campylobacter jejuni subsp. jejuni serotype O:2 (strain ATCC 700819 / NCTC 11168) protein is Thymidylate kinase (tmk).